A 1282-amino-acid chain; its full sequence is Ribosome biogenesis protein BMS1 homolog (1282 aa).

The span at 1–24 (MEAKDQKKHRKKNSGPKAAKKKKR) shows a compositional bias: basic residues. Residues 1–43 (MEAKDQKKHRKKNSGPKAAKKKKRLLQDLQLGDEEDARKRNPK) form a disordered region. A Glycyl lysine isopeptide (Lys-Gly) (interchain with G-Cter in SUMO2) cross-link involves residue K43. Residues 80–245 (PPPIVVVVMG…GRFITVMKFR (166 aa)) enclose the Bms1-type G domain. The segment at 89-96 (GPPKVGKS) is G1. An ATP-binding site is contributed by 89 to 96 (GPPKVGKS). The segment at 117-121 (PVTIV) is G2. Residues 132–135 (ECGC) form a G3 region. Positions 184-187 (THLD) are G4. S188 is modified (phosphoserine). A G5 region spans residues 219–228 (LSGMVHGEYQ). 2 disordered regions span residues 397-557 (DSKP…ANCQ) and 575-667 (PTFD…ALKW). Residues K399 and K415 each participate in a glycyl lysine isopeptide (Lys-Gly) (interchain with G-Cter in SUMO2) cross-link. Acidic residues-rich tracts occupy residues 434-472 (GDED…ENAE) and 503-531 (DSDD…EDCT). Residues 535-550 (KGISGSKAAGEGSKAG) are compositionally biased toward low complexity. The residue at position 552 (S552) is a Phosphoserine. Positions 588-610 (FASEDESEESSSLSAEEEDSENE) are enriched in acidic residues. S625 and S639 each carry phosphoserine. A Glycyl lysine isopeptide (Lys-Gly) (interchain with G-Cter in SUMO2) cross-link involves residue K646. The span at 653–667 (EENNDSKETSGALKW) shows a compositional bias: basic and acidic residues. T708 is subject to Phosphothreonine. Disordered stretches follow at residues 787-822 (ETGD…ESAK) and 1178-1202 (NKPK…IREP). Residue K810 forms a Glycyl lysine isopeptide (Lys-Gly) (interchain with G-Cter in SUMO1); alternate linkage. Residue K810 forms a Glycyl lysine isopeptide (Lys-Gly) (interchain with G-Cter in SUMO2); alternate linkage. K1206 is covalently cross-linked (Glycyl lysine isopeptide (Lys-Gly) (interchain with G-Cter in SUMO2)). The tract at residues 1219–1282 (SQKMKKAKEQ…SLKGAEGQLQ (64 aa)) is disordered. Basic and acidic residues predominate over residues 1228-1248 (QRHLHNKEHFRAKQKEEEEKL). Over residues 1249-1259 (KRQKDLRKKLF) the composition is skewed to basic residues.

This sequence belongs to the TRAFAC class translation factor GTPase superfamily. Bms1-like GTPase family. BMS1 subfamily. As to quaternary structure, part of the small subunit (SSU) processome, composed of more than 70 proteins and the RNA chaperone small nucleolar RNA (snoRNA) U3. Interacts with RCL1.

It is found in the nucleus. The protein localises to the nucleolus. The enzyme catalyses GTP + H2O = GDP + phosphate + H(+). Functionally, GTPase required for the synthesis of 40S ribosomal subunits and for processing of pre-ribosomal RNA (pre-rRNA) at sites A0, A1, and A2. Controls access of pre-rRNA intermediates to RCL1 during ribosome biogenesis by binding RCL1 in a GTP-dependent manner, and delivering it to pre-ribosomes. GTP-binding and/or GTP hydrolysis may induce conformational rearrangements within the BMS1-RCL1 complex allowing the interaction of RCL1 with its RNA substrate. Required for RCL1 import into the nucleus. In Homo sapiens (Human), this protein is Ribosome biogenesis protein BMS1 homolog.